We begin with the raw amino-acid sequence, 179 residues long: Ribulose bisphosphate carboxylase small subunit, chloroplastic 1/4 (179 aa).

The N-terminal 58 residues, 1 to 58 (MAASSTMLSSVATAACAAPAQASMVAPFVGLKSTSAFPVTQKPATGLSTLPSNGGRVQ), are a transit peptide targeting the chloroplast.

This sequence belongs to the RuBisCO small chain family. In terms of assembly, heterohexadecamer of 8 large and 8 small subunits.

The protein resides in the plastid. Its subcellular location is the chloroplast. Functionally, ruBisCO catalyzes two reactions: the carboxylation of D-ribulose 1,5-bisphosphate, the primary event in carbon dioxide fixation, as well as the oxidative fragmentation of the pentose substrate. Both reactions occur simultaneously and in competition at the same active site. Although the small subunit is not catalytic it is essential for maximal activity. This chain is Ribulose bisphosphate carboxylase small subunit, chloroplastic 1/4 (RBCS1), found in Fritillaria agrestis (Stinkbells).